We begin with the raw amino-acid sequence, 200 residues long: MSKVLVLYYSTYGHLETMAQAVAEGARSAGATVDVKRVPETVPQEIARSAHFKLDQSAPVATVTELENYDAIIVGAPTRFGRMPSQMGSFLDQAGGLWARGALNGKVGAAFTSTATQHGGQETTLFSIITNLLHFGMVIVGLPYSFQGQMTLDEVVGGAPYGATTIAGGQGQRQPSATELDGARFQGRLVAETANKLFGG.

In terms of domain architecture, Flavodoxin-like spans Val4–Val190. FMN-binding positions include Ser10–Leu15 and Thr78–Phe80. Tyr12 serves as a coordination point for NAD(+). Trp98 lines the substrate pocket. FMN-binding positions include Ser113–Gly119 and His134.

The protein belongs to the WrbA family. The cofactor is FMN.

It catalyses the reaction a quinone + NADH + H(+) = a quinol + NAD(+). The catalysed reaction is a quinone + NADPH + H(+) = a quinol + NADP(+). This is NAD(P)H dehydrogenase (quinone) from Acidovorax ebreus (strain TPSY) (Diaphorobacter sp. (strain TPSY)).